Consider the following 438-residue polypeptide: Aflatoxin cluster transcriptional coactivator aflS (438 aa).

Residues 65-134 (LALYNQLLAC…PSPGHVAHSV (70 aa)) form the HTH iclR-type domain. The segment at residues 95–114 (FEDVADIAGVPECRLRRLVR) is a DNA-binding region (H-T-H motif).

As to quaternary structure, interacts with aflR.

Its subcellular location is the nucleus. The protein resides in the endosome. Functionally, transcription coactivator involved in regulation of the aflatoxin biosynthesis gene cluster with aflR. The ratio of the expression data between aflS:aflR plays a crucial role in the regulation of aflatoxins production. A high ratio, produced at a range between 17 and 30 degrees Celsius, corresponds with the production profile of aflatoxin G1 biosynthesis. A low ratio, produced over 30 degrees Celsius, is related to aflatoxin B1 biosynthesis. AflJ may act in aflR transport to or from the nucleus, thus controlling the availability of aflR for transcriptional activation of aflatoxin biosynthesis cluster genes. AflJ may also assist in directing endosomes to the cytoplasmic membrane for aflatoxin export. This is Aflatoxin cluster transcriptional coactivator aflS from Aspergillus parasiticus (strain ATCC 56775 / NRRL 5862 / SRRC 143 / SU-1).